Reading from the N-terminus, the 79-residue chain is MPKRVLQGVVVSDKNDKTVVVKVERRYSHPLLKKTVRQSKKYKAHDESNQFKIGDQIFIQESKPISKDKRWIVVKDSVA.

This sequence belongs to the universal ribosomal protein uS17 family. As to quaternary structure, part of the 30S ribosomal subunit.

Its function is as follows. One of the primary rRNA binding proteins, it binds specifically to the 5'-end of 16S ribosomal RNA. The polypeptide is Small ribosomal subunit protein uS17 (Bartonella henselae (strain ATCC 49882 / DSM 28221 / CCUG 30454 / Houston 1) (Rochalimaea henselae)).